Here is a 147-residue protein sequence, read N- to C-terminus: Large ribosomal subunit protein uL11 (147 aa).

This sequence belongs to the universal ribosomal protein uL11 family. As to quaternary structure, part of the ribosomal stalk of the 50S ribosomal subunit. Interacts with L10 and the large rRNA to form the base of the stalk. L10 forms an elongated spine to which L12 dimers bind in a sequential fashion forming a multimeric L10(L12)X complex. One or more lysine residues are methylated.

Its function is as follows. Forms part of the ribosomal stalk which helps the ribosome interact with GTP-bound translation factors. The sequence is that of Large ribosomal subunit protein uL11 from Sorangium cellulosum (strain So ce56) (Polyangium cellulosum (strain So ce56)).